Reading from the N-terminus, the 78-residue chain is Large ribosomal subunit protein bL28 (78 aa).

Positions 1 to 23 (MSRKCQITGKKANNAMAVSHSHR) are disordered.

The protein belongs to the bacterial ribosomal protein bL28 family.

This is Large ribosomal subunit protein bL28 from Picosynechococcus sp. (strain ATCC 27264 / PCC 7002 / PR-6) (Agmenellum quadruplicatum).